The primary structure comprises 946 residues: Bifunctional glutamine synthetase adenylyltransferase/adenylyl-removing enzyme (946 aa).

The interval 1 to 440 (MKPLSSPLQQ…VFNELIGDDE (440 aa)) is adenylyl removase. Residues 449–946 (SEQWRELWQD…ASWQKWLVEE (498 aa)) are adenylyl transferase.

It belongs to the GlnE family. Mg(2+) is required as a cofactor.

It carries out the reaction [glutamine synthetase]-O(4)-(5'-adenylyl)-L-tyrosine + phosphate = [glutamine synthetase]-L-tyrosine + ADP. The enzyme catalyses [glutamine synthetase]-L-tyrosine + ATP = [glutamine synthetase]-O(4)-(5'-adenylyl)-L-tyrosine + diphosphate. In terms of biological role, involved in the regulation of glutamine synthetase GlnA, a key enzyme in the process to assimilate ammonia. When cellular nitrogen levels are high, the C-terminal adenylyl transferase (AT) inactivates GlnA by covalent transfer of an adenylyl group from ATP to specific tyrosine residue of GlnA, thus reducing its activity. Conversely, when nitrogen levels are low, the N-terminal adenylyl removase (AR) activates GlnA by removing the adenylyl group by phosphorolysis, increasing its activity. The regulatory region of GlnE binds the signal transduction protein PII (GlnB) which indicates the nitrogen status of the cell. The polypeptide is Bifunctional glutamine synthetase adenylyltransferase/adenylyl-removing enzyme (Escherichia coli O7:K1 (strain IAI39 / ExPEC)).